A 99-amino-acid chain; its full sequence is DNA-directed RNA polymerase subunit omega (99 aa).

Belongs to the RNA polymerase subunit omega family. The RNAP catalytic core consists of 2 alpha, 1 beta, 1 beta' and 1 omega subunit. When a sigma factor is associated with the core the holoenzyme is formed, which can initiate transcription.

The catalysed reaction is RNA(n) + a ribonucleoside 5'-triphosphate = RNA(n+1) + diphosphate. In terms of biological role, promotes RNA polymerase assembly. Latches the N- and C-terminal regions of the beta' subunit thereby facilitating its interaction with the beta and alpha subunits. The polypeptide is DNA-directed RNA polymerase subunit omega (Stenotrophomonas maltophilia (strain K279a)).